The chain runs to 512 residues: ATP synthase subunit alpha (512 aa).

169 to 176 contacts ATP; the sequence is GDRQTGKT.

Belongs to the ATPase alpha/beta chains family. As to quaternary structure, F-type ATPases have 2 components, CF(1) - the catalytic core - and CF(0) - the membrane proton channel. CF(1) has five subunits: alpha(3), beta(3), gamma(1), delta(1), epsilon(1). CF(0) has three main subunits: a(1), b(2) and c(9-12). The alpha and beta chains form an alternating ring which encloses part of the gamma chain. CF(1) is attached to CF(0) by a central stalk formed by the gamma and epsilon chains, while a peripheral stalk is formed by the delta and b chains.

It is found in the cell inner membrane. The catalysed reaction is ATP + H2O + 4 H(+)(in) = ADP + phosphate + 5 H(+)(out). In terms of biological role, produces ATP from ADP in the presence of a proton gradient across the membrane. The alpha chain is a regulatory subunit. The chain is ATP synthase subunit alpha from Rickettsia akari (strain Hartford).